Here is a 245-residue protein sequence, read N- to C-terminus: DNA polymerase sliding clamp (245 aa).

It belongs to the PCNA family. In terms of assembly, homotrimer. The subunits circularize to form a toroid; DNA passes through its center. Replication factor C (RFC) is required to load the toroid on the DNA.

In terms of biological role, sliding clamp subunit that acts as a moving platform for DNA processing. Responsible for tethering the catalytic subunit of DNA polymerase and other proteins to DNA during high-speed replication. This Methanosarcina acetivorans (strain ATCC 35395 / DSM 2834 / JCM 12185 / C2A) protein is DNA polymerase sliding clamp.